A 142-amino-acid polypeptide reads, in one-letter code: Probable transport accessory protein MmpS5 (142 aa).

A helical membrane pass occupies residues 7 to 26 (RAWIPLLILVVVAIAGFTVQ).

Belongs to the MmpS family.

The protein resides in the cell membrane. The sequence is that of Probable transport accessory protein MmpS5 (mmpS5) from Mycobacterium bovis (strain ATCC BAA-935 / AF2122/97).